The primary structure comprises 82 residues: Delta-actitoxin-Aeq2c (82 aa).

Positions 1–19 are cleaved as a signal peptide; that stretch reads MNRLMILVFAAVFLALASA. A propeptide spanning residues 20 to 26 is cleaved from the precursor; it reads DEDVDIA. Intrachain disulfides connect cysteine 32/cysteine 79, cysteine 34/cysteine 69, and cysteine 62/cysteine 80.

Belongs to the sea anemone sodium channel inhibitory toxin family. Type I subfamily.

The protein resides in the secreted. Its subcellular location is the nematocyst. In terms of biological role, binds specifically to voltage-gated sodium channels (Nav), thereby delaying their inactivation during signal transduction. Causes death to crabs. The chain is Delta-actitoxin-Aeq2c from Actinia equina (Beadlet anemone).